The sequence spans 308 residues: Probable inositol oxygenase (308 aa).

Residues R49 and 106–108 each bind substrate; that span reads DDS. Positions 119, 144, and 145 each coordinate Fe cation. Substrate-binding positions include K148 and 165–166; that span reads GD. H217, H243, and D276 together coordinate Fe cation. Position 243–244 (243–244) interacts with substrate; it reads HS.

This sequence belongs to the myo-inositol oxygenase family. Fe cation serves as cofactor.

Its subcellular location is the cytoplasm. The catalysed reaction is myo-inositol + O2 = D-glucuronate + H2O + H(+). Its pathway is polyol metabolism; myo-inositol degradation into D-glucuronate; D-glucuronate from myo-inositol: step 1/1. Functionally, involved in the biosynthesis of UDP-glucuronic acid (UDP-GlcA), providing nucleotide sugars for cell-wall polymers. May be also involved in plant ascorbate biosynthesis. This Oryza sativa subsp. japonica (Rice) protein is Probable inositol oxygenase.